The sequence spans 507 residues: Protein DETOXIFICATION 39 (507 aa).

The next 12 helical transmembrane spans lie at 58-78, 92-112, 141-161, 178-198, 209-229, 233-253, 287-307, 318-338, 359-379, 403-423, 433-453, and 459-479; these read VLFR…GMGI, LAAA…MLGM, IVLA…YPIL, IAGL…QKFL, FISA…VYVM, FMGI…SQCF, AVMI…AGLL, SICM…NAAV, WTAT…VIWF, FLAI…VAVG, VNVG…GFTF, and GIWT…LYVT.

The protein belongs to the multi antimicrobial extrusion (MATE) (TC 2.A.66.1) family.

Its subcellular location is the membrane. The polypeptide is Protein DETOXIFICATION 39 (Arabidopsis thaliana (Mouse-ear cress)).